A 425-amino-acid polypeptide reads, in one-letter code: Pleckstrin homology domain-containing family A member 2 (425 aa).

Residues 7 to 113 (QNRICGFLDI…WVEALNQASK (107 aa)) form the PH 1 domain. Residue Lys-141 forms a Glycyl lysine isopeptide (Lys-Gly) (interchain with G-Cter in SUMO2) linkage. The residue at position 184 (Ser-184) is a Phosphoserine. Positions 198 to 298 (PLIKSGYCVK…WIKEIGAAVQ (101 aa)) constitute a PH 2 domain. Residues 312–330 (SISLTRPGSSSLSSGPNSI) are compositionally biased toward low complexity. Positions 312–332 (SISLTRPGSSSLSSGPNSILC) are disordered. A phosphoserine mark is found at Ser-314 and Ser-349. Positions 352–425 (SSWQPWTPVP…DDENIRTSDV (74 aa)) are disordered. Residues 400–410 (RSEPQHPKEKP) show a composition bias toward basic and acidic residues.

Binds MPDZ and PTPN13. As to expression, highly expressed in heart, kidney, spleen and peripheral blood leukocytes. Detected at lower levels in brain, skeletal muscle, colon, thymus, liver, small intestine, placenta and lung.

It is found in the cytoplasm. It localises to the cell membrane. The protein resides in the nucleus. Binds specifically to phosphatidylinositol 3,4-diphosphate (PtdIns3,4P2), but not to other phosphoinositides. May recruit other proteins to the plasma membrane. The protein is Pleckstrin homology domain-containing family A member 2 (PLEKHA2) of Homo sapiens (Human).